The sequence spans 535 residues: GMP synthase [glutamine-hydrolyzing] (535 aa).

One can recognise a Glutamine amidotransferase type-1 domain in the interval 21-211; it reads LIVILDFGSQ…VYHICDCEPT (191 aa). C98 (nucleophile) is an active-site residue. Active-site residues include H185 and E187. A GMPS ATP-PPase domain is found at 212–410; sequence WTTAAFVEEA…LGLPEEIVQR (199 aa). 239–245 lines the ATP pocket; it reads SGGVDSS.

In terms of assembly, homodimer.

It carries out the reaction XMP + L-glutamine + ATP + H2O = GMP + L-glutamate + AMP + diphosphate + 2 H(+). The protein operates within purine metabolism; GMP biosynthesis; GMP from XMP (L-Gln route): step 1/1. Its function is as follows. Catalyzes the synthesis of GMP from XMP. This Thermosynechococcus vestitus (strain NIES-2133 / IAM M-273 / BP-1) protein is GMP synthase [glutamine-hydrolyzing].